The chain runs to 608 residues: UvrABC system protein C (608 aa).

The GIY-YIG domain occupies 13–91 (HKPGVYIMHD…IKKNSPKYNI (79 aa)). Residues 202-237 (DELTKKLTDKMMAASKNLNFELAAKLRDSITNIQVI) enclose the UVR domain.

This sequence belongs to the UvrC family. In terms of assembly, interacts with UvrB in an incision complex.

It is found in the cytoplasm. Functionally, the UvrABC repair system catalyzes the recognition and processing of DNA lesions. UvrC both incises the 5' and 3' sides of the lesion. The N-terminal half is responsible for the 3' incision and the C-terminal half is responsible for the 5' incision. The polypeptide is UvrABC system protein C (Finegoldia magna (strain ATCC 29328 / DSM 20472 / WAL 2508) (Peptostreptococcus magnus)).